The primary structure comprises 101 residues: MPMERDSHEEILNKLNDPELEHSERTELLQQLRADYGSVLSEFSELTSATEKLRAENSDLIVSNSKLFRQVGITKEKEEEIKQEELSETITIEDLEKQAQL.

Positions 1–24 (MPMERDSHEEILNKLNDPELEHSE) are disordered. Residues 79–99 (EEIKQEELSETITIEDLEKQA) adopt a coiled-coil conformation.

Belongs to the phi29likevirus scaffolding protein family. As to quaternary structure, homodimer. Interacts non-specifically with DNA; probably binds DNA in the early stages of DNA packaging.

Scaffolding protein involved in the icosahedric procapsid assembly. Coassembles with the capsid proteins to form the procapsid. The scaffolding protein is found within the capsid as a serie of concentric shells. During DNA packaging, the scaffolding protein molecules are released from the procapsid. This Bacillus subtilis (Bacteriophage B103) protein is Capsid assembly scaffolding protein (7).